A 747-amino-acid polypeptide reads, in one-letter code: ATP-dependent RNA helicase DBP7 (747 aa).

Disordered stretches follow at residues 1 to 102 (MDDD…TYVS) and 111 to 130 (SKLE…SNAP). Over residues 15–24 (SNASSKSSAQ) the composition is skewed to polar residues. Composition is skewed to basic and acidic residues over residues 75-96 (SFRE…EGGK) and 111-123 (SKLE…EEKT). The short motif at 135-164 (DDFNGLGLNDNLVHHLTESLRFKNPTQIQK) is the Q motif element. The region spanning 168–363 (PSLLSTSRDL…SIILNNPEQI (196 aa)) is the Helicase ATP-binding domain. 181-188 (AQTGSGKT) serves as a coordination point for ATP. The DEAD box motif lies at 295–298 (DEGD). In terms of domain architecture, Helicase C-terminal spans 401–626 (TLSAVLKEVA…SSEIKKSDPK (226 aa)). Residues 700 to 729 (KKLGSLATKSSSTRKEYGEKSRKLEDPRKK) form a disordered region. Over residues 712 to 728 (TRKEYGEKSRKLEDPRK) the composition is skewed to basic and acidic residues.

It belongs to the DEAD box helicase family. DDX31/DBP7 subfamily.

It localises to the nucleus. The protein localises to the nucleolus. The enzyme catalyses ATP + H2O = ADP + phosphate + H(+). Functionally, ATP-binding RNA helicase involved in the biogenesis of 60S ribosomal subunits and is required for the normal formation of 25S and 5.8S rRNAs. In Meyerozyma guilliermondii (strain ATCC 6260 / CBS 566 / DSM 6381 / JCM 1539 / NBRC 10279 / NRRL Y-324) (Yeast), this protein is ATP-dependent RNA helicase DBP7 (DBP7).